The primary structure comprises 650 residues: Acetyl-coenzyme A synthetase (650 aa).

CoA-binding positions include 191-194 (RGGR), Thr311, and Asn335. Residues 387–389 (GEP), 411–416 (DTWWQT), Asp500, and Arg515 each bind ATP. Position 523 (Ser523) interacts with CoA. ATP is bound at residue Arg526. The Mg(2+) site is built by Val537, His539, and Val542. Arg584 contributes to the CoA binding site. An N6-acetyllysine modification is found at Lys609.

Belongs to the ATP-dependent AMP-binding enzyme family. Mg(2+) is required as a cofactor. Acetylated. Deacetylation by the SIR2-homolog deacetylase activates the enzyme.

The enzyme catalyses acetate + ATP + CoA = acetyl-CoA + AMP + diphosphate. Functionally, catalyzes the conversion of acetate into acetyl-CoA (AcCoA), an essential intermediate at the junction of anabolic and catabolic pathways. AcsA undergoes a two-step reaction. In the first half reaction, AcsA combines acetate with ATP to form acetyl-adenylate (AcAMP) intermediate. In the second half reaction, it can then transfer the acetyl group from AcAMP to the sulfhydryl group of CoA, forming the product AcCoA. In Shewanella baltica (strain OS195), this protein is Acetyl-coenzyme A synthetase.